A 994-amino-acid chain; its full sequence is MVLAPLLLGLLLLPALWSGGTAEKWEETELDQLFSGPLPGRLPVNHRPFSAPHSSRDQLPPPQTGRSHPAHTAAPQVTSTASKLLPPVAFNHTIGHIVLSEHKNVKFNCSINIPNTYQETAGISWWKDGKELLGAHHSITQFYPDEEGVSIIALFSIASVQRSDNGSYFCKMKVNNREIVSDPIYVEVQGLPYFIKQPESVNVTRNTAFNLTCQAVGPPEPVNIFWVQNSSRVNEKPERSPSVLTVPGLTETAVFSCEAHNDKGLTVSKGVHINIKVIPSPPTEVHILNSTAHSILVSWVPGFDGYSPLQNCSIQVKEADRLSNGSVMVFNTSASPHLYEIQQLQALANYSIAVSCRNEIGWSAVSPWILASTTEGAPSVAPLNITVFLNESNNILDIRWTKPPIKRQDGELVGYRISHVWESAGTYKELSEEVSQNGSWAQIPVQIHNATCTVRIAAITKGGIGPFSEPVNIIIPEHSKVDYAPSSTPAPGNTDSMFIILGCFCGFILIGLILCISLALRRRVQETKFGGAFSEEDSQLVVNYRAKKSFCRRAIELTLQSLGVSEELQNKLEDVVIDRNLLVLGKVLGEGEFGSVMEGNLKQEDGTSQKVAVKTMKLDNFSQREIEEFLSEAACMKDFNHPNVIRLLGVCIELSSQGIPKPMVILPFMKYGDLHTFLLYSRLNTGPKYIHLQTLLKFMMDIAQGMEYLSNRNFLHRDLAARNCMLRDDMTVCVADFGLSKKIYSGDYYRQGRIAKMPVKWIAIESLADRVYTSKSDVWAFGVTMWEITTRGMTPYPGVQNHEMYDYLLHGHRLKQPEDCLDELYDIMYSCWSADPLDRPTFSVLRLQLEKLSESLPDAQDKESIIYINTQLLESCEGIANGPSLTGLDMNIDPDSIIASCTPGAAVSVVTAEVHENNLREERYILNGGNEEWEDVSSTPFAAVTPEKDGVLPEDRLTKNGVSWSHHSTLPLGSPSPDELLFVDDSLEDSEVLM.

Residues 1-18 form the signal peptide; that stretch reads MVLAPLLLGLLLLPALWS. Over 19–497 the chain is Extracellular; sequence GGTAEKWEET…TPAPGNTDSM (479 aa). The tract at residues 44 to 78 is disordered; it reads VNHRPFSAPHSSRDQLPPPQTGRSHPAHTAAPQVT. Ig-like C2-type domains are found at residues 75-181 and 192-268; these read PQVT…EIVS and PYFI…LTVS. 15 N-linked (GlcNAc...) asparagine glycosylation sites follow: N91, N108, N165, N202, N210, N229, N289, N311, N324, N331, N349, N384, N390, N437, and N449. C109 and C170 form a disulfide bridge. Residues C213 and C257 are joined by a disulfide bond. 2 Fibronectin type-III domains span residues 281 to 376 and 381 to 478; these read PPTE…TTEG and APLN…IPEH. The chain crosses the membrane as a helical span at residues 498–518; it reads FIILGCFCGFILIGLILCISL. Residues 519–994 are Cytoplasmic-facing; that stretch reads ALRRRVQETK…DSLEDSEVLM (476 aa). A Phosphoserine modification is found at S538. The 271-residue stretch at 582–852 folds into the Protein kinase domain; that stretch reads LVLGKVLGEG…SVLRLQLEKL (271 aa). Residues 588-596 and K610 each bind ATP; that span reads LGEGEFGSV. D718 acts as the Proton acceptor in catalysis. Residues Y744, Y748, Y749, and Y867 each carry the phosphotyrosine; by autocatalysis modification.

The protein belongs to the protein kinase superfamily. Tyr protein kinase family. AXL/UFO subfamily. As to quaternary structure, interacts (upon activation) with TNK2; stimulates TNK2 autophosphorylation. Interacts (via N-terminus) with extracellular ligands LGALS3, TUB, TULP1 and GAS6. Interacts with VAV1 in a phosphotyrosine-independent manner. Interacts with TIMD4; this interaction enhances TIMD4-mediated efferocytosis. Post-translationally, autophosphorylated on Tyr-744, Tyr-748 and Tyr-749 in the activation loop allowing full activity. Autophosphorylated on Tyr-867 leading to recruitment of downstream partners of the signaling cascade such as PLCG2. In terms of tissue distribution, expressed predominantly in the hematopoietic lineages: macrophages, NK cells, NKT cells, dendritic cells and platelets.

It is found in the cell membrane. The enzyme catalyses L-tyrosyl-[protein] + ATP = O-phospho-L-tyrosyl-[protein] + ADP + H(+). Receptor tyrosine kinase that transduces signals from the extracellular matrix into the cytoplasm by binding to several ligands including LGALS3, TUB, TULP1 or GAS6. Regulates many physiological processes including cell survival, migration, differentiation, and phagocytosis of apoptotic cells (efferocytosis). Ligand binding at the cell surface induces autophosphorylation of MERTK on its intracellular domain that provides docking sites for downstream signaling molecules. Following activation by ligand, interacts with GRB2 or PLCG2 and induces phosphorylation of MAPK1, MAPK2, FAK/PTK2 or RAC1. MERTK signaling plays a role in various processes such as macrophage clearance of apoptotic cells, platelet aggregation, cytoskeleton reorganization and engulfment. Functions in the retinal pigment epithelium (RPE) as a regulator of rod outer segments fragments phagocytosis. Also plays an important role in inhibition of Toll-like receptors (TLRs)-mediated innate immune response by activating STAT1, which selectively induces production of suppressors of cytokine signaling SOCS1 and SOCS3. The polypeptide is Tyrosine-protein kinase Mer (Mertk) (Mus musculus (Mouse)).